Consider the following 241-residue polypeptide: UDP-2,3-diacylglucosamine hydrolase (241 aa).

5 residues coordinate Mn(2+): Asp-8, His-10, Asp-41, Asn-78, and His-113. Position 78–79 (78–79 (NR)) interacts with substrate. The substrate site is built by Asp-121, Ser-159, Asn-163, Lys-166, and His-194. 2 residues coordinate Mn(2+): His-194 and His-196.

This sequence belongs to the LpxH family. It depends on Mn(2+) as a cofactor.

The protein resides in the cell inner membrane. It catalyses the reaction UDP-2-N,3-O-bis[(3R)-3-hydroxytetradecanoyl]-alpha-D-glucosamine + H2O = 2-N,3-O-bis[(3R)-3-hydroxytetradecanoyl]-alpha-D-glucosaminyl 1-phosphate + UMP + 2 H(+). The protein operates within glycolipid biosynthesis; lipid IV(A) biosynthesis; lipid IV(A) from (3R)-3-hydroxytetradecanoyl-[acyl-carrier-protein] and UDP-N-acetyl-alpha-D-glucosamine: step 4/6. Its function is as follows. Hydrolyzes the pyrophosphate bond of UDP-2,3-diacylglucosamine to yield 2,3-diacylglucosamine 1-phosphate (lipid X) and UMP by catalyzing the attack of water at the alpha-P atom. Involved in the biosynthesis of lipid A, a phosphorylated glycolipid that anchors the lipopolysaccharide to the outer membrane of the cell. This Shewanella putrefaciens (strain CN-32 / ATCC BAA-453) protein is UDP-2,3-diacylglucosamine hydrolase.